We begin with the raw amino-acid sequence, 81 residues long: Small ribosomal subunit protein bS16 (81 aa).

It belongs to the bacterial ribosomal protein bS16 family.

This chain is Small ribosomal subunit protein bS16, found in Treponema denticola (strain ATCC 35405 / DSM 14222 / CIP 103919 / JCM 8153 / KCTC 15104).